A 416-amino-acid polypeptide reads, in one-letter code: Glutamyl-tRNA reductase (416 aa).

Residues 49–52 (TCNR), Ser105, 110–112 (EPQ), and Gln116 contribute to the substrate site. Residue Cys50 is the Nucleophile of the active site. 185 to 190 (GAGETI) is a binding site for NADP(+).

Belongs to the glutamyl-tRNA reductase family. Homodimer.

It carries out the reaction (S)-4-amino-5-oxopentanoate + tRNA(Glu) + NADP(+) = L-glutamyl-tRNA(Glu) + NADPH + H(+). It participates in porphyrin-containing compound metabolism; protoporphyrin-IX biosynthesis; 5-aminolevulinate from L-glutamyl-tRNA(Glu): step 1/2. Catalyzes the NADPH-dependent reduction of glutamyl-tRNA(Glu) to glutamate 1-semialdehyde (GSA). The protein is Glutamyl-tRNA reductase of Shewanella piezotolerans (strain WP3 / JCM 13877).